A 498-amino-acid polypeptide reads, in one-letter code: Glycerol kinase (498 aa).

Thr12 provides a ligand contact to ADP. Positions 12, 13, and 14 each coordinate ATP. Thr12 contacts sn-glycerol 3-phosphate. Arg16 provides a ligand contact to ADP. Sn-glycerol 3-phosphate-binding residues include Arg82, Glu83, Tyr134, and Asp244. Residues Arg82, Glu83, Tyr134, Asp244, and Gln245 each contribute to the glycerol site. ADP is bound by residues Thr266 and Gly309. ATP-binding residues include Thr266, Gly309, Gln313, and Gly410. Gly410 and Asn414 together coordinate ADP.

It belongs to the FGGY kinase family. In terms of assembly, homotetramer and homodimer (in equilibrium).

The enzyme catalyses glycerol + ATP = sn-glycerol 3-phosphate + ADP + H(+). It functions in the pathway polyol metabolism; glycerol degradation via glycerol kinase pathway; sn-glycerol 3-phosphate from glycerol: step 1/1. Activated by phosphorylation and inhibited by fructose 1,6-bisphosphate (FBP). Key enzyme in the regulation of glycerol uptake and metabolism. Catalyzes the phosphorylation of glycerol to yield sn-glycerol 3-phosphate. This Natranaerobius thermophilus (strain ATCC BAA-1301 / DSM 18059 / JW/NM-WN-LF) protein is Glycerol kinase.